A 142-amino-acid polypeptide reads, in one-letter code: Protein E6 (142 aa).

Zinc fingers lie at residues 30-66 and 103-139; these read CVFC…CTPC and CFDC…CRNC.

Belongs to the papillomaviridae E6 protein family. As to quaternary structure, forms homodimers. Interacts with ubiquitin-protein ligase UBE3A/E6-AP; this interaction stimulates UBE3A ubiquitin activity. Interacts with host BAK1.

The protein localises to the host cytoplasm. It is found in the host nucleus. Its function is as follows. Plays a major role in the induction and maintenance of cellular transformation. E6 associates with host UBE3A/E6-AP ubiquitin-protein ligase and modulates its activity. Protects host keratinocytes from apoptosis by mediating the degradation of host BAK1. May also inhibit host immune response. This chain is Protein E6, found in Homo sapiens (Human).